A 329-amino-acid polypeptide reads, in one-letter code: DNA-directed RNA polymerase subunit alpha (329 aa).

An alpha N-terminal domain (alpha-NTD) region spans residues 1-232; sequence MQEMLEQLLT…YQLIAFVDLK (232 aa). Residues 246-329 form an alpha C-terminal domain (alpha-CTD) region; that stretch reads FDPIFLQPVD…PSSLVSKESA (84 aa).

This sequence belongs to the RNA polymerase alpha chain family. Homodimer. The RNAP catalytic core consists of 2 alpha, 1 beta, 1 beta' and 1 omega subunit. When a sigma factor is associated with the core the holoenzyme is formed, which can initiate transcription.

The enzyme catalyses RNA(n) + a ribonucleoside 5'-triphosphate = RNA(n+1) + diphosphate. Functionally, DNA-dependent RNA polymerase catalyzes the transcription of DNA into RNA using the four ribonucleoside triphosphates as substrates. In Hydrogenovibrio crunogenus (strain DSM 25203 / XCL-2) (Thiomicrospira crunogena), this protein is DNA-directed RNA polymerase subunit alpha.